Consider the following 80-residue polypeptide: Acyl carrier protein (80 aa).

The 76-residue stretch at 4 to 79 (EAILEKVRSI…DAVKYIEDKQ (76 aa)) folds into the Carrier domain. An O-(pantetheine 4'-phosphoryl)serine modification is found at Ser-39.

It belongs to the acyl carrier protein (ACP) family. 4'-phosphopantetheine is transferred from CoA to a specific serine of apo-ACP by AcpS. This modification is essential for activity because fatty acids are bound in thioester linkage to the sulfhydryl of the prosthetic group.

It is found in the cytoplasm. The protein operates within lipid metabolism; fatty acid biosynthesis. Its function is as follows. Carrier of the growing fatty acid chain in fatty acid biosynthesis. In Synechococcus sp. (strain CC9902), this protein is Acyl carrier protein.